Consider the following 570-residue polypeptide: Structure-specific endonuclease subunit EME1 (570 aa).

Low complexity predominate over residues 1-14; that stretch reads MALRRLSLSRLSTE. Positions 1–86 are disordered; it reads MALRRLSLSR…AGPVRVLSSS (86 aa). A phosphoserine mark is found at Ser12 and Ser15. Over residues 68–79 the composition is skewed to low complexity; the sequence is PSAAGAPPQAGP. Phosphoserine is present on residues Ser84, Ser85, and Ser87. Lys103 is covalently cross-linked (Glycyl lysine isopeptide (Lys-Gly) (interchain with G-Cter in SUMO2)). Ser117 carries the phosphoserine modification. The span at 118–130 shows a compositional bias: polar residues; it reads SLKTGLDGQNNAS. 3 disordered regions span residues 118–147, 185–231, and 370–400; these read SLKTGLDGQNNASAPCDWKRQPWPKIPDVP, KTNS…ERKK, and RPQNPPRRRKSGMANKQAKAKHQQRQESSTG. Glycyl lysine isopeptide (Lys-Gly) (interchain with G-Cter in SUMO2) cross-links involve residues Lys136 and Lys142. Over residues 218–231 the composition is skewed to basic and acidic residues; the sequence is SRKENTPRQHERKK. The nuclease-like domain; forms the post-nick DNA binding interface and is involved in DNA recognition and bending stretch occupies residues 249–456; that stretch reads KHIVVVLDPV…PFKKLRDQVT (208 aa). Positions 476–570 are helix-hairpin-helix (2HhH); forms the pre-nick DNA binding interface and is involved in DNA recognition and bending; that stretch reads RGLALIWRRQ…QPDLILDSVD (95 aa).

Belongs to the EME1/MMS4 family. In terms of assembly, part of the heterodimeric MUS81-EME1 complex. In terms of tissue distribution, weakly expressed in brain, heart, kidney, liver, lung, muscle, skin, small intestine, spleen, stomach, testis and thymus. Expressed in bone marrow. Also expressed in embryonic stem cells (ES cells).

The protein localises to the nucleus. The protein resides in the nucleolus. Non-catalytic subunit of the structure-specific, heterodimeric DNA endonuclease MUS81-EME1 which is involved in the maintenance of genome stability. In the complex, EME1 is required for DNA cleavage, participating in DNA recognition and bending. MUS81-EME1 cleaves 3'-flaps and nicked Holliday junctions, and exhibit limited endonuclease activity with 5' flaps and nicked double-stranded DNAs. Active during prometaphase, MUS81-EME1 resolves mitotic recombination intermediates, including Holliday junctions, which form during homologous recombination. This Mus musculus (Mouse) protein is Structure-specific endonuclease subunit EME1.